A 494-amino-acid chain; its full sequence is Lipopolysaccharide core galacturonosyltransferase RgtB (494 aa).

The next 10 helical transmembrane spans lie at I9 to A29, L74 to L94, A104 to Q124, L127 to S147, Y156 to L176, W197 to L217, L251 to G271, M291 to I311, L316 to V336, and F345 to A365.

Belongs to the glycosyltransferase 83 family.

The protein localises to the cell inner membrane. The protein operates within bacterial outer membrane biogenesis; LPS core biosynthesis. Functionally, involved in the modification of the lipopolysaccharide (LPS) inner core. Catalyzes the transfer of a galacturonic acid (GalA) residue to the 5-position of the outer Kdo (3-deoxy-D-manno-octulosonic acid) residue of the LPS inner core, using dodecaprenyl phosphate-GalA as the donor substrate. Acts after the other GalA transferase RgtA. In Rhizobium johnstonii (strain DSM 114642 / LMG 32736 / 3841) (Rhizobium leguminosarum bv. viciae), this protein is Lipopolysaccharide core galacturonosyltransferase RgtB.